Here is a 461-residue protein sequence, read N- to C-terminus: Cysteine--tRNA ligase (461 aa).

C28 serves as a coordination point for Zn(2+). A 'HIGH' region motif is present at residues 30-40 (VTIYDLCHIGH). Zn(2+) is bound by residues C209, H234, and E238. The 'KMSKS' region signature appears at 266-270 (KMSKS). K269 lines the ATP pocket.

This sequence belongs to the class-I aminoacyl-tRNA synthetase family. Monomer. The cofactor is Zn(2+).

The protein localises to the cytoplasm. The catalysed reaction is tRNA(Cys) + L-cysteine + ATP = L-cysteinyl-tRNA(Cys) + AMP + diphosphate. The chain is Cysteine--tRNA ligase from Vibrio atlanticus (strain LGP32) (Vibrio splendidus (strain Mel32)).